Here is a 414-residue protein sequence, read N- to C-terminus: Multifunctional CCA protein (414 aa).

The ATP site is built by Gly-8 and Arg-11. Gly-8 and Arg-11 together coordinate CTP. 2 residues coordinate Mg(2+): Glu-21 and Asp-23. The ATP site is built by Arg-91, Arg-137, and Arg-140. CTP is bound by residues Arg-91, Arg-137, and Arg-140. In terms of domain architecture, HD spans 228–329; the sequence is TGIHTMMTVA…LKLFDAIDVW (102 aa).

This sequence belongs to the tRNA nucleotidyltransferase/poly(A) polymerase family. Bacterial CCA-adding enzyme type 1 subfamily. In terms of assembly, monomer. Can also form homodimers and oligomers. Mg(2+) is required as a cofactor. Ni(2+) serves as cofactor.

It carries out the reaction a tRNA precursor + 2 CTP + ATP = a tRNA with a 3' CCA end + 3 diphosphate. It catalyses the reaction a tRNA with a 3' CCA end + 2 CTP + ATP = a tRNA with a 3' CCACCA end + 3 diphosphate. Functionally, catalyzes the addition and repair of the essential 3'-terminal CCA sequence in tRNAs without using a nucleic acid template. Adds these three nucleotides in the order of C, C, and A to the tRNA nucleotide-73, using CTP and ATP as substrates and producing inorganic pyrophosphate. tRNA 3'-terminal CCA addition is required both for tRNA processing and repair. Also involved in tRNA surveillance by mediating tandem CCA addition to generate a CCACCA at the 3' terminus of unstable tRNAs. While stable tRNAs receive only 3'-terminal CCA, unstable tRNAs are marked with CCACCA and rapidly degraded. This chain is Multifunctional CCA protein, found in Pectobacterium atrosepticum (strain SCRI 1043 / ATCC BAA-672) (Erwinia carotovora subsp. atroseptica).